The following is a 329-amino-acid chain: Malate dehydrogenase (329 aa).

12-18 (GAAGQIG) serves as a coordination point for NAD(+). Residues arginine 93 and arginine 99 each coordinate substrate. NAD(+) contacts are provided by residues asparagine 106, glutamine 113, and 130 to 132 (VGN). Residues asparagine 132 and arginine 163 each contribute to the substrate site. The Proton acceptor role is filled by histidine 188.

The protein belongs to the LDH/MDH superfamily. MDH type 2 family.

The catalysed reaction is (S)-malate + NAD(+) = oxaloacetate + NADH + H(+). In terms of biological role, catalyzes the reversible oxidation of malate to oxaloacetate. In Frankia casuarinae (strain DSM 45818 / CECT 9043 / HFP020203 / CcI3), this protein is Malate dehydrogenase.